We begin with the raw amino-acid sequence, 169 residues long: NADH-quinone oxidoreductase subunit B (169 aa).

Positions 45, 46, 111, and 141 each coordinate [4Fe-4S] cluster.

This sequence belongs to the complex I 20 kDa subunit family. NDH-1 is composed of 14 different subunits. Subunits NuoB, C, D, E, F, and G constitute the peripheral sector of the complex. [4Fe-4S] cluster serves as cofactor.

It localises to the cell membrane. It catalyses the reaction a quinone + NADH + 5 H(+)(in) = a quinol + NAD(+) + 4 H(+)(out). Its function is as follows. NDH-1 shuttles electrons from NADH, via FMN and iron-sulfur (Fe-S) centers, to quinones in the respiratory chain. The immediate electron acceptor for the enzyme in this species is believed to be a menaquinone. Couples the redox reaction to proton translocation (for every two electrons transferred, four hydrogen ions are translocated across the cytoplasmic membrane), and thus conserves the redox energy in a proton gradient. This Clostridium beijerinckii (strain ATCC 51743 / NCIMB 8052) (Clostridium acetobutylicum) protein is NADH-quinone oxidoreductase subunit B.